A 701-amino-acid chain; its full sequence is Polyribonucleotide nucleotidyltransferase (701 aa).

Mg(2+) is bound by residues Asp-487 and Asp-493. The KH domain maps to 554-613 (PTMIAMKIDTDKIRDVIGKGGATIRAICEETKASIDIEDDGSIKIFGESKEAAEAARQRV). An S1 motif domain is found at 623-691 (GKIYLGKVER…NRGRIKLSIK (69 aa)).

It belongs to the polyribonucleotide nucleotidyltransferase family. As to quaternary structure, component of the RNA degradosome, which is a multiprotein complex involved in RNA processing and mRNA degradation. Mg(2+) serves as cofactor.

It localises to the cytoplasm. The catalysed reaction is RNA(n+1) + phosphate = RNA(n) + a ribonucleoside 5'-diphosphate. In terms of biological role, involved in mRNA degradation. Catalyzes the phosphorolysis of single-stranded polyribonucleotides processively in the 3'- to 5'-direction. The polypeptide is Polyribonucleotide nucleotidyltransferase (Pseudomonas syringae pv. tomato (strain ATCC BAA-871 / DC3000)).